The sequence spans 124 residues: Ribonuclease pancreatic (124 aa).

The segment covering 1-13 (KETAAAKFERQHI) has biased composition (basic and acidic residues). Residues 1-24 (KETAAAKFERQHIDSNPSSVSSSN) form a disordered region. The substrate site is built by K7 and R10. H12 functions as the Proton acceptor in the catalytic mechanism. Over residues 15–24 (SNPSSVSSSN) the composition is skewed to low complexity. 4 disulfide bridges follow: C26/C84, C40/C95, C58/C110, and C65/C72. The N-linked (GlcNAc...) asparagine; partial glycan is linked to N34. Substrate is bound by residues 41–45 (KPVNT), K66, and R85. The Proton donor role is filled by H119.

It belongs to the pancreatic ribonuclease family. In terms of assembly, monomer. Interacts with and forms tight 1:1 complexes with RNH1. Dimerization of two such complexes may occur. Interaction with RNH1 inhibits this protein. In terms of tissue distribution, pancreas.

Its subcellular location is the secreted. It carries out the reaction an [RNA] containing cytidine + H2O = an [RNA]-3'-cytidine-3'-phosphate + a 5'-hydroxy-ribonucleotide-3'-[RNA].. It catalyses the reaction an [RNA] containing uridine + H2O = an [RNA]-3'-uridine-3'-phosphate + a 5'-hydroxy-ribonucleotide-3'-[RNA].. Functionally, endonuclease that catalyzes the cleavage of RNA on the 3' side of pyrimidine nucleotides. Acts on single-stranded and double-stranded RNA. This Antilocapra americana (Pronghorn) protein is Ribonuclease pancreatic (RNASE1).